We begin with the raw amino-acid sequence, 134 residues long: Small ribosomal subunit protein uS11 (134 aa).

Belongs to the universal ribosomal protein uS11 family. Part of the 30S ribosomal subunit. Interacts with proteins S7 and S18. Binds to IF-3.

Functionally, located on the platform of the 30S subunit, it bridges several disparate RNA helices of the 16S rRNA. Forms part of the Shine-Dalgarno cleft in the 70S ribosome. The chain is Small ribosomal subunit protein uS11 from Leptothrix cholodnii (strain ATCC 51168 / LMG 8142 / SP-6) (Leptothrix discophora (strain SP-6)).